The following is a 257-amino-acid chain: Short-chain dehydrogenase reductase 3b (257 aa).

12–36 (IITGGASGIGAESVRLFTEHGARVV) is a binding site for NAD(+). Residue Ser-144 participates in substrate binding. The active-site Proton acceptor is the Tyr-157.

This sequence belongs to the short-chain dehydrogenases/reductases (SDR) family.

This Arabidopsis thaliana (Mouse-ear cress) protein is Short-chain dehydrogenase reductase 3b (SDR3b).